The primary structure comprises 129 residues: Small ribosomal subunit protein uS11 (129 aa).

This sequence belongs to the universal ribosomal protein uS11 family. In terms of assembly, part of the 30S ribosomal subunit. Interacts with proteins S7 and S18. Binds to IF-3.

In terms of biological role, located on the platform of the 30S subunit, it bridges several disparate RNA helices of the 16S rRNA. Forms part of the Shine-Dalgarno cleft in the 70S ribosome. The protein is Small ribosomal subunit protein uS11 of Haemophilus influenzae (strain ATCC 51907 / DSM 11121 / KW20 / Rd).